A 227-amino-acid polypeptide reads, in one-letter code: Ribosomal RNA large subunit methyltransferase E (227 aa).

5 residues coordinate S-adenosyl-L-methionine: Gly78, Trp80, Asp103, Asp119, and Asp143. Lys183 functions as the Proton acceptor in the catalytic mechanism.

This sequence belongs to the class I-like SAM-binding methyltransferase superfamily. RNA methyltransferase RlmE family.

It is found in the cytoplasm. It carries out the reaction uridine(2552) in 23S rRNA + S-adenosyl-L-methionine = 2'-O-methyluridine(2552) in 23S rRNA + S-adenosyl-L-homocysteine + H(+). Its function is as follows. Specifically methylates the uridine in position 2552 of 23S rRNA at the 2'-O position of the ribose in the fully assembled 50S ribosomal subunit. The sequence is that of Ribosomal RNA large subunit methyltransferase E from Rickettsia rickettsii (strain Iowa).